A 572-amino-acid chain; its full sequence is NADP-dependent malic enzyme (572 aa).

Methionine 1 carries the post-translational modification N-acetylmethionine. The active-site Proton donor is tyrosine 102. Arginine 155 serves as a coordination point for NADP(+). Lysine 173 acts as the Proton acceptor in catalysis. A divalent metal cation is bound by residues glutamate 245, aspartate 246, and aspartate 269. NADP(+) is bound by residues aspartate 269 and 301–318 (GAGE…MALE). The residue at position 336 (serine 336) is a Phosphoserine. NADP(+) is bound at residue asparagine 408.

Belongs to the malic enzymes family. As to quaternary structure, homotetramer. Mg(2+) is required as a cofactor. Mn(2+) serves as cofactor. Expressed in all tissues tested including liver, placenta and white adipose tissue.

Its subcellular location is the cytoplasm. The enzyme catalyses (S)-malate + NADP(+) = pyruvate + CO2 + NADPH. It carries out the reaction oxaloacetate + H(+) = pyruvate + CO2. Catalyzes the oxidative decarboxylation of (S)-malate in the presence of NADP(+) and divalent metal ions, and decarboxylation of oxaloacetate. This chain is NADP-dependent malic enzyme, found in Homo sapiens (Human).